Reading from the N-terminus, the 226-residue chain is UPF0173 metal-dependent hydrolase GWCH70_2696 (226 aa).

This sequence belongs to the UPF0173 family.

The sequence is that of UPF0173 metal-dependent hydrolase GWCH70_2696 from Geobacillus sp. (strain WCH70).